Here is a 600-residue protein sequence, read N- to C-terminus: Rhesus-like glycoprotein B (600 aa).

The Cytoplasmic segment spans residues 1–16 (MSKDEHKLPLSKRKES). A helical transmembrane segment spans residues 17 to 37 (IIFMMILFAFQVFMVVLFSVW). Residues 38-73 (VRYSKNEVNYSTLTPEQLQELEATGGVVQEEVTNIY) are Extracellular-facing. An N-linked (GlcNAc...) asparagine glycan is attached at Asn-46. Residues 74–94 (GYFRDINIMIFFGFGFLMTFL) form a helical membrane-spanning segment. The Cytoplasmic segment spans residues 95–102 (RRYGYSAL). The helical transmembrane segment at 103–123 (GYTFIISALVAQWSVLIYGFF) threads the bilayer. At 124-145 (ETVDHKNDHGGDYASTFEMSQT) the chain is on the extracellular side. The chain crosses the membrane as a helical span at residues 146–166 (VLLQGLFCAGAVMISYGAVLG). At 167 to 170 (RVTP) the chain is on the cytoplasmic side. Residues 171–191 (LQMLVVGIFEPIFYFLNMFIG) traverse the membrane as a helical segment. Topologically, residues 192–199 (EMNLEAID) are extracellular. Residues 200–220 (VGGGMYIHLFGSVFGLTIAWF) traverse the membrane as a helical segment. At 221–240 (LTDKKSKDCEDNSPSYTGDY) the chain is on the cytoplasmic side. Residues 241-261 (FAMAGTLFLWMMWPSFNAAIA) form a helical membrane-spanning segment. Over 262–274 (PLGEPQFRAIANT) the chain is Extracellular. A helical membrane pass occupies residues 275 to 295 (FLSLTASTIATFIVTRLFGHL). At 296-303 (GHKIDMVH) the chain is on the cytoplasmic side. The chain crosses the membrane as a helical span at residues 304 to 323 (VQNSSLAGGVVQGCLAHMNI). Residues 324 to 325 (NP) lie on the Extracellular side of the membrane. The chain crosses the membrane as a helical span at residues 326–346 (GGAIGMGFLAGVISVIGYLFI). Topologically, residues 347–361 (SPFLQRRFNIQDTCG) are cytoplasmic. A helical transmembrane segment spans residues 362–382 (IHNLHFMPGFIGSIAACIAAW). Topologically, residues 383–411 (KGLNDRSLYNPIEFNQIFRAGEDQARNNA) are extracellular. A helical membrane pass occupies residues 412–432 (AATFISIGIAIAGGLFVGMIL). The Cytoplasmic segment spans residues 433-600 (KALKKVGGLK…SSTNSPTSKV (168 aa)). The interval 471–600 (NLPMPTTDNG…SSTNSPTSKV (130 aa)) is disordered. The span at 498 to 510 (NKKENGYRRDLIR) shows a compositional bias: basic and acidic residues. Low complexity predominate over residues 519–529 (EQSTDSSYSDS). A compositionally biased stretch (basic residues) spans 540-554 (RIRKLAKKSYRRSKK). Residues 555 to 566 (SHSEHQPQHQPE) are compositionally biased toward basic and acidic residues. Low complexity predominate over residues 571–580 (NNNNNNNNNN). A compositionally biased stretch (polar residues) spans 581-600 (ATAETTDNGGSSTNSPTSKV).

Belongs to the ammonium transporter (TC 2.A.49) family. Rh subfamily.

Its subcellular location is the membrane. Functionally, may be a carbon dioxide/bicarbonate transporter. This is Rhesus-like glycoprotein B (rhgB) from Dictyostelium discoideum (Social amoeba).